Reading from the N-terminus, the 354-residue chain is UDP-glucose 4-epimerase 1 (354 aa).

8-39 is an NAD(+) binding site; it reads TILVTGGAGYIGSHTVLQLLQLGFRVVVLDNL. Position 133 (Ser-133) interacts with substrate. Residue Tyr-157 is the Proton acceptor of the active site.

The protein belongs to the NAD(P)-dependent epimerase/dehydratase family. The cofactor is NAD(+).

The enzyme catalyses UDP-alpha-D-glucose = UDP-alpha-D-galactose. It functions in the pathway carbohydrate metabolism; galactose metabolism. Its function is as follows. Catalyzes the interconversion between UDP-glucose and UDP-galactose. In Oryza sativa subsp. japonica (Rice), this protein is UDP-glucose 4-epimerase 1 (UGE-1).